The sequence spans 178 residues: Flagellar transcriptional regulator FlhC (178 aa).

4 residues coordinate Zn(2+): Cys-138, Cys-141, Cys-158, and Cys-161.

Belongs to the FlhC family. In terms of assembly, heterohexamer composed of two FlhC and four FlhD subunits. Each FlhC binds a FlhD dimer, forming a heterotrimer, and a hexamer assembles by dimerization of two heterotrimers. Zn(2+) serves as cofactor.

The protein resides in the cytoplasm. Functionally, functions in complex with FlhD as a master transcriptional regulator that regulates transcription of several flagellar and non-flagellar operons by binding to their promoter region. Activates expression of class 2 flagellar genes, including fliA, which is a flagellum-specific sigma factor that turns on the class 3 genes. Also regulates genes whose products function in a variety of physiological pathways. The protein is Flagellar transcriptional regulator FlhC of Erwinia tasmaniensis (strain DSM 17950 / CFBP 7177 / CIP 109463 / NCPPB 4357 / Et1/99).